A 689-amino-acid chain; its full sequence is MAPWPELGDAQPNPDKYLEGAAGQQPTAPDKSKETNKNNTEAPVTKIELLPTYSTATLIDEPTEVDDPWNIPTLQDSGIKWSERDTKGKILCVFQGIGRLILLLGFLYFFVCSLDILSSAFQLVGGKMAGQFFSNSSIMSNPLLGLVIGVLVTVLVQSSSTSTSIVVSMVSSSLLTVRAAIPIIMGANIGTSITNTIVALMQVGDRSEFRRAFAGATVHDFFNWLSVLVLLPVEVATHYLEIITQLIVDSFHSKNGEDAPDLLKVITKPFTKLIVQLDKKIISQIAMNDEKAKNKSLVKIWCKTFTNKTQVNVTVPSTANCTSPSLCWTDGIQTWTMKNVTYKENIAKCQHIFVNFHLPDLAVGTILLILSLLVLCGCLIMIVKILGSVLKGQVATVIKKTINTDFPFPFAWLTGYLAILVGAGMTFIVQSSSVFTSALTPLIGIGVITIERAYPLTLGSNIGTTTTAILAALASPGNALRSSLQIALCHFFFNISGILLWYPIPFTRLPIRMAKGLGNISAKYRWFAVFYLIIFFFLIPLTVFGLSLAGWRVLVGVGVPVVFIIILVLCLRLLQSRCPRVLPKKLQNWNFLPLWMRSLKPWDAVFSKFTGCFQMRCCCCCRVCCRACCLLCGCPKCCRCSKCCEDLEEAHEGQDVPVKAPDTFDNITISREAQGEVPASDSKTECTAL.

The interval 1–41 (MAPWPELGDAQPNPDKYLEGAAGQQPTAPDKSKETNKNNTE) is disordered. The Cytoplasmic segment spans residues 1-100 (MAPWPELGDA…LCVFQGIGRL (100 aa)). Residues 101-121 (ILLLGFLYFFVCSLDILSSAF) traverse the membrane as a helical segment. Residues 122–135 (QLVGGKMAGQFFSN) are Extracellular-facing. The chain crosses the membrane as a helical span at residues 136–156 (SSIMSNPLLGLVIGVLVTVLV). The Cytoplasmic portion of the chain corresponds to 157–212 (QSSSTSTSIVVSMVSSSLLTVRAAIPIIMGANIGTSITNTIVALMQVGDRSEFRRA). Residues 213 to 233 (FAGATVHDFFNWLSVLVLLPV) form a helical membrane-spanning segment. Topologically, residues 234-362 (EVATHYLEII…FVNFHLPDLA (129 aa)) are extracellular. Residues N294, N307, and N320 are each glycosylated (N-linked (GlcNAc...) asparagine). A disulfide bridge links C302 with C349. Residues 363 to 383 (VGTILLILSLLVLCGCLIMIV) form a helical membrane-spanning segment. The Cytoplasmic segment spans residues 384–407 (KILGSVLKGQVATVIKKTINTDFP). The chain crosses the membrane as a helical span at residues 408–428 (FPFAWLTGYLAILVGAGMTFI). Residues 429-485 (VQSSSVFTSALTPLIGIGVITIERAYPLTLGSNIGTTTTAILAALASPGNALRSSLQ) lie on the Extracellular side of the membrane. A helical membrane pass occupies residues 486–506 (IALCHFFFNISGILLWYPIPF). Residues 507-525 (TRLPIRMAKGLGNISAKYR) lie on the Cytoplasmic side of the membrane. Residues 526–546 (WFAVFYLIIFFFLIPLTVFGL) form a helical membrane-spanning segment. At 547 to 552 (SLAGWR) the chain is on the extracellular side. A helical transmembrane segment spans residues 553–573 (VLVGVGVPVVFIIILVLCLRL). The Cytoplasmic portion of the chain corresponds to 574 to 687 (LQSRCPRVLP…PASDSKTECT (114 aa)).

This sequence belongs to the SLC34A transporter family.

Its subcellular location is the apical cell membrane. It catalyses the reaction 3 Na(+)(out) + phosphate(out) = 3 Na(+)(in) + phosphate(in). Its function is as follows. Involved in actively transporting phosphate into cells via Na(+) cotransport. The chain is Sodium-dependent phosphate transport protein 2B (SLC34A2) from Pongo abelii (Sumatran orangutan).